The chain runs to 235 residues: 7-cyano-7-deazaguanine synthase (235 aa).

13–23 (FSGGLDSTTCL) serves as a coordination point for ATP. The Zn(2+) site is built by Cys-197, Cys-207, Cys-210, and Cys-213.

The protein belongs to the QueC family. The cofactor is Zn(2+).

It carries out the reaction 7-carboxy-7-deazaguanine + NH4(+) + ATP = 7-cyano-7-deazaguanine + ADP + phosphate + H2O + H(+). Its pathway is purine metabolism; 7-cyano-7-deazaguanine biosynthesis. In terms of biological role, catalyzes the ATP-dependent conversion of 7-carboxy-7-deazaguanine (CDG) to 7-cyano-7-deazaguanine (preQ(0)). This is 7-cyano-7-deazaguanine synthase from Solidesulfovibrio magneticus (strain ATCC 700980 / DSM 13731 / RS-1) (Desulfovibrio magneticus).